Reading from the N-terminus, the 231-residue chain is Lipoprotein-releasing system ATP-binding protein LolD (231 aa).

Positions L6–Q231 constitute an ABC transporter domain. G42 to S49 serves as a coordination point for ATP.

Belongs to the ABC transporter superfamily. Lipoprotein translocase (TC 3.A.1.125) family. As to quaternary structure, the complex is composed of two ATP-binding proteins (LolD) and two transmembrane proteins (LolC and LolE).

It localises to the cell inner membrane. Functionally, part of the ABC transporter complex LolCDE involved in the translocation of mature outer membrane-directed lipoproteins, from the inner membrane to the periplasmic chaperone, LolA. Responsible for the formation of the LolA-lipoprotein complex in an ATP-dependent manner. This is Lipoprotein-releasing system ATP-binding protein LolD from Shewanella sp. (strain MR-7).